The chain runs to 353 residues: Methionine import ATP-binding protein MetN (353 aa).

An ABC transporter domain is found at 8–249 (LDQIDVTFHQ…PKQPLTQDFI (242 aa)). 42 to 49 (GYSGAGKS) contacts ATP.

The protein belongs to the ABC transporter superfamily. Methionine importer (TC 3.A.1.24) family. The complex is composed of two ATP-binding proteins (MetN), two transmembrane proteins (MetI) and a solute-binding protein (MetQ).

It is found in the cell membrane. The catalysed reaction is L-methionine(out) + ATP + H2O = L-methionine(in) + ADP + phosphate + H(+). The enzyme catalyses D-methionine(out) + ATP + H2O = D-methionine(in) + ADP + phosphate + H(+). Part of the ABC transporter complex MetNIQ involved in methionine import. Responsible for energy coupling to the transport system. This is Methionine import ATP-binding protein MetN from Streptococcus pneumoniae (strain ATCC BAA-255 / R6).